The primary structure comprises 277 residues: Bis(5'-nucleosyl)-tetraphosphatase, symmetrical (277 aa).

Belongs to the Ap4A hydrolase family.

The catalysed reaction is P(1),P(4)-bis(5'-adenosyl) tetraphosphate + H2O = 2 ADP + 2 H(+). Hydrolyzes diadenosine 5',5'''-P1,P4-tetraphosphate to yield ADP. This chain is Bis(5'-nucleosyl)-tetraphosphatase, symmetrical, found in Bordetella bronchiseptica (strain ATCC BAA-588 / NCTC 13252 / RB50) (Alcaligenes bronchisepticus).